Consider the following 279-residue polypeptide: Large ribosomal subunit protein uL5c (279 aa).

Disordered regions lie at residues 1-23 (MAAT…TASS) and 40-63 (LRVA…SPSG). The transit peptide at 1 to 43 (MAATAVTLPSSPAPFPVTTTASSSRNVRLLLRSPPPRRALRVA) directs the protein to the chloroplast. Residues 41–50 (RVAASAAADA) are compositionally biased toward low complexity. Positions 51 to 60 (PPKPAPPPTS) are enriched in pro residues.

This sequence belongs to the universal ribosomal protein uL5 family. In terms of assembly, part of the 50S ribosomal subunit; contacts the 5S rRNA.

Its subcellular location is the plastid. It localises to the chloroplast. Functionally, binds 5S rRNA, forms part of the central protuberance of the 50S subunit. This is Large ribosomal subunit protein uL5c (RPL5) from Oryza sativa subsp. japonica (Rice).